We begin with the raw amino-acid sequence, 346 residues long: Ribulose-5-phosphate reductase (346 aa).

Residues Cys45, His71, Glu72, and Glu151 each contribute to the Zn(2+) site.

This sequence belongs to the zinc-containing alcohol dehydrogenase family. It depends on Zn(2+) as a cofactor.

The catalysed reaction is D-ribitol 5-phosphate + NADP(+) = D-ribulose 5-phosphate + NADPH + H(+). It participates in cell wall biogenesis; poly(ribitol phosphate) teichoic acid biosynthesis. Catalyzes the NADPH dependent reduction of D-ribulose 5-phosphate to D-ribitol 5-phosphate. This Streptococcus pneumoniae (strain ATCC BAA-255 / R6) protein is Ribulose-5-phosphate reductase.